The sequence spans 263 residues: 4-hydroxy-2-oxo-heptane-1,7-dioate aldolase (263 aa).

H45 (proton acceptor) is an active-site residue. A substrate-binding site is contributed by Q147. E149 contributes to the a divalent metal cation binding site. Residues A174 and D175 each contribute to the substrate site. D175 contributes to the a divalent metal cation binding site.

This sequence belongs to the HpcH/HpaI aldolase family. As to quaternary structure, homohexamer; trimer of dimers. Requires a divalent metal cation as cofactor.

It catalyses the reaction 4-hydroxy-2-oxoheptanedioate = succinate semialdehyde + pyruvate. The protein operates within aromatic compound metabolism; 4-hydroxyphenylacetate degradation; pyruvate and succinate semialdehyde from 4-hydroxyphenylacetate: step 7/7. Functionally, catalyzes the reversible retro-aldol cleavage of 4-hydroxy-2-ketoheptane-1,7-dioate (HKHD) to pyruvate and succinic semialdehyde. The protein is 4-hydroxy-2-oxo-heptane-1,7-dioate aldolase of Salmonella enteritidis PT4 (strain P125109).